We begin with the raw amino-acid sequence, 484 residues long: ATP synthase subunit beta (484 aa).

ATP is bound at residue Gly168 to Thr175.

The protein belongs to the ATPase alpha/beta chains family. As to quaternary structure, F-type ATPases have 2 components, CF(1) - the catalytic core - and CF(0) - the membrane proton channel. CF(1) has five subunits: alpha(3), beta(3), gamma(1), delta(1), epsilon(1). CF(0) has three main subunits: a(1), b(2) and c(9-12). The alpha and beta chains form an alternating ring which encloses part of the gamma chain. CF(1) is attached to CF(0) by a central stalk formed by the gamma and epsilon chains, while a peripheral stalk is formed by the delta and b chains.

The protein resides in the cell membrane. It carries out the reaction ATP + H2O + 4 H(+)(in) = ADP + phosphate + 5 H(+)(out). In terms of biological role, produces ATP from ADP in the presence of a proton gradient across the membrane. The catalytic sites are hosted primarily by the beta subunits. The chain is ATP synthase subunit beta from Arthrobacter sp. (strain FB24).